Consider the following 485-residue polypeptide: MVAMEKKTKLVEEEDGCYYYDYGGYGDGVVDDEGRATELRPMALSRPHTQAFHLAWMSLFACFFAAFAAPPILPAMRPALVLAPSDASAAAVASLSATLVGRLAMGPACDLLGPRRASGVASLVCALALALAAVFASSPAGFVALRFVAGLSLANFVANQHWMSRIFAPSAVGLANAVAAGWANVGSAAAQVVMPVAYDAVVLRLGVPVTVAWRVTYLLPCAMLVTTGLAVLAFPYDLPGGGGGRCPGGGGGRRRSFWAVVRGGVGDYRAWLLGLTYGHCYGVELIMENVAADFFRRRFRLPMEAAGAAAACFGAMNAVARPAGGVASDEVARRFGMRGRLWALWAVQSAGAALCVLVGRMGAAEAPSLAATVAVMVACAAFVQAASGLTFGIVPFVCKRSLGVVSGMTASGGAVGAIVTNRLFFSGSRYTVEEAISCTGITSLLCTLPVALIHFRRQGGMFCGPSATIDGDGDVDDDDDYMLLK.

Helical transmembrane passes span 56 to 76 (WMSL…LPAM), 80 to 100 (LVLA…ATLV), 119 to 139 (GVAS…ASSP), 147 to 167 (FVAG…SRIF), 177 to 197 (AVAA…MPVA), 215 to 235 (VTYL…LAFP), 270 to 290 (AWLL…MENV), 305 to 327 (AAGA…GGVA), 341 to 361 (LWAL…VGRM), 377 to 397 (VACA…VPFV), 405 to 425 (VSGM…RLFF), and 435 to 455 (AISC…LIHF).

This sequence belongs to the major facilitator superfamily. Nitrate/nitrite porter (TC 2.A.1.8) family. In terms of tissue distribution, expressed in the base of the lateral root primordia, root-shoot junction zone, leaves, ends of the husk and vascular tissue of the anthers.

It is found in the cell membrane. Functionally, involved in nitrate transport. The polypeptide is Probable high-affinity nitrate transporter 2.4 (NRT2.4) (Oryza sativa subsp. japonica (Rice)).